A 124-amino-acid polypeptide reads, in one-letter code: S-adenosylmethionine decarboxylase proenzyme (124 aa).

The active-site Schiff-base intermediate with substrate; via pyruvic acid is the Ser63. Ser63 is modified (pyruvic acid (Ser); by autocatalysis). His68 (proton acceptor; for processing activity) is an active-site residue. Catalysis depends on Cys83, which acts as the Proton donor; for catalytic activity.

This sequence belongs to the prokaryotic AdoMetDC family. Type 1 subfamily. As to quaternary structure, heterotetramer of two alpha and two beta chains arranged as a dimer of alpha/beta heterodimers. Pyruvate serves as cofactor. Is synthesized initially as an inactive proenzyme. Formation of the active enzyme involves a self-maturation process in which the active site pyruvoyl group is generated from an internal serine residue via an autocatalytic post-translational modification. Two non-identical subunits are generated from the proenzyme in this reaction, and the pyruvate is formed at the N-terminus of the alpha chain, which is derived from the carboxyl end of the proenzyme. The post-translation cleavage follows an unusual pathway, termed non-hydrolytic serinolysis, in which the side chain hydroxyl group of the serine supplies its oxygen atom to form the C-terminus of the beta chain, while the remainder of the serine residue undergoes an oxidative deamination to produce ammonia and the pyruvoyl group blocking the N-terminus of the alpha chain.

It carries out the reaction S-adenosyl-L-methionine + H(+) = S-adenosyl 3-(methylsulfanyl)propylamine + CO2. It participates in amine and polyamine biosynthesis; S-adenosylmethioninamine biosynthesis; S-adenosylmethioninamine from S-adenosyl-L-methionine: step 1/1. Functionally, catalyzes the decarboxylation of S-adenosylmethionine to S-adenosylmethioninamine (dcAdoMet), the propylamine donor required for the synthesis of the polyamines spermine and spermidine from the diamine putrescine. The sequence is that of S-adenosylmethionine decarboxylase proenzyme from Geobacillus sp. (strain WCH70).